A 705-amino-acid polypeptide reads, in one-letter code: Calpastatin (705 aa).

Disordered stretches follow at residues 1–211 (MNPT…PNDA) and 226–493 (LTTC…PLPP). Basic and acidic residues-rich tracts occupy residues 7-17 (KAVKTEPEKKP) and 24-62 (VVHE…EKAV). Residue Lys10 forms a Glycyl lysine isopeptide (Lys-Gly) (interchain with G-Cter in SUMO2) linkage. Lys28 carries the N6-acetyllysine modification. Low complexity-rich tracts occupy residues 63-72 (SKSSEQPPSE) and 94-103 (PAAAAAASAE). Ser65 carries the post-translational modification Phosphoserine. Thr115 bears the Phosphothreonine mark. Positions 135–151 (TALDDLIDTLGEPEEMK) are enriched in acidic residues. One copy of the Inhibitory domain 1 repeat lies at 149 to 202 (EMKEDNTTYTGPEVSDPMSSTYIEELGKRESTPPPKYKELLNKEEGIAGPPPDS). Over residues 173–194 (ELGKRESTPPPKYKELLNKEEG) the composition is skewed to basic and acidic residues. Ser202 and Ser230 each carry phosphoserine. The segment covering 234 to 248 (DGKETEKEKSTEEAL) has biased composition (basic and acidic residues). The segment covering 275–286 (TEQALQALSASL) has biased composition (polar residues). 2 stretches are compositionally biased toward basic and acidic residues: residues 289–317 (RKPE…KKCG) and 327–352 (YRLK…KPLS). The stretch at 292-344 (EPELDPSSIREVDEAKAKEEKVKKCGEDEETVPSEYRLKPATDKDGKPLLPEA) is one Inhibitory domain 2 repeat. Ser352, Ser354, and Ser361 each carry phosphoserine. Residues 355–364 (ELIDELSEDF) are compositionally biased toward acidic residues. A compositionally biased stretch (basic and acidic residues) spans 365–381 (DQSKPTEKQSKPTEKTE). Ser428 is subject to Phosphoserine. Residues 430-489 (PKKEADPEDGKPVEDKVKEKAKEEDRENFGEKEETIPPDYRLEEAKDKDGKPLLPKEVKE) show a composition bias toward basic and acidic residues. Residues 434-487 (ADPEDGKPVEDKVKEKAKEEDRENFGEKEETIPPDYRLEEAKDKDGKPLLPKEV) form an Inhibitory domain 3 repeat. Residues Ser504 and Ser515 each carry the phosphoserine modification. The disordered stretch occupies residues 527–705 (VSEVVSQTPA…KPKADGKSTS (179 aa)). Over residues 533–542 (QTPAPTTQAA) the composition is skewed to low complexity. Ser563 carries the post-translational modification Phosphoserine. Residues 571-624 (PDPDENKPVEDKVKEKAKAEHRDKLGERDDTIPPKYQHLLDDNKEGTPGKPKDQ) form an Inhibitory domain 4 repeat. Residues 571–625 (PDPDENKPVEDKVKEKAKAEHRDKLGERDDTIPPKYQHLLDDNKEGTPGKPKDQR) show a composition bias toward basic and acidic residues. A compositionally biased stretch (low complexity) spans 651–662 (DSCPSTTETSTD). Residues 683–705 (KAKDSTKAKEETSKPKADGKSTS) show a composition bias toward basic and acidic residues.

This sequence belongs to the protease inhibitor I27 (calpastatin) family.

Its function is as follows. Specific inhibition of calpain (calcium-dependent cysteine protease). Plays a key role in postmortem tenderization of meat and have been proposed to be involved in muscle protein degradation in living tissue. The protein is Calpastatin (CAST) of Bos taurus (Bovine).